Reading from the N-terminus, the 169-residue chain is Ribosome maturation factor RimM (169 aa).

The region spanning 97-169 is the PRC barrel domain; sequence EDEVYFKDLI…KIVVDWEYDY (73 aa).

It belongs to the RimM family. As to quaternary structure, binds ribosomal protein uS19.

It is found in the cytoplasm. Functionally, an accessory protein needed during the final step in the assembly of 30S ribosomal subunit, possibly for assembly of the head region. Essential for efficient processing of 16S rRNA. May be needed both before and after RbfA during the maturation of 16S rRNA. It has affinity for free ribosomal 30S subunits but not for 70S ribosomes. This is Ribosome maturation factor RimM from Francisella tularensis subsp. tularensis (strain WY96-3418).